Here is a 1407-residue protein sequence, read N- to C-terminus: MKDLLKFLKAQTKTEEFDAIKIALASPDMIRSWSFGEVKKPETINYRTFKPERDGLFCARIFGPVKDYECLCGKYKRLKHRGVICEKCGVEVTQTKVRRERMGHIELASPTAHIWFLKSLPSRIGLLLDMPLRDIERVLYFESYVVIEGGMTNLERQQILTEEQYLDALEEFGDEFDAKMGAEAIQALLKSMDLEQECEQLREELNETNSETKRKKLTKRIKLLEAFVQSGNKPEWMILTVLPVLPPDLRPLVPLDGGRFATSDLNDLYRRVINRNNRLKRLLDLAAPDIIVRNEKRMLQEAVDALLDNGRRGRAITGSNKRPLKSLADMIKGKQGRFRQNLLGKRVDYSGRSVITVGPYLRLHQCGLPKKMALELFKPFIYGKLELRGLATTIKAAKKMVEREEAVVWDILDEVIREHPVLLNRAPTLHRLGIQAFEPVLIEGKAIQLHPLVCAAYNADFDGDQMAVHVPLTLEAQLEARALMMSTNNILSPANGEPIIVPSQDVVLGLYYMTRDCVNAKGEGMVLTGPKEAERLYRSGLASLHARVKVRITEYEKDANGELVAKTSLKDTTVGRAILWMIVPKGLPYSIVNQALGKKAISKMLNTCYRILGLKPTVIFADQIMYTGFAYAARSGASVGIDDMVIPEKKHEIISEAEAEVAEIQEQFQSGLVTAGERYNKVIDIWAAANDRVSKAMMDNLQTETVINRDGQEEKQVSFNSIYMMADSGARGSAAQIRQLAGMRGLMAKPDGSIIETPITANFREGLNVLQYFISTHGARKGLADTALKTANSGYLTRRLVDVAQDLVVTEDDRGTHEGIMMTPVIEGGDVKEPLRDRVLGRVTAEDVLKPGTADILVPRNTLLHEQWCDLLEENSVDAVKVRSVVSCDTDFGVCAHCYGRDLARGHIINKGEAIGVIAAQSIGEPGTQLTMRTFHIGGAASRAAAESSIQVKNKGSIKLSNVKSVVNSSGKLVITSRNTELKLIDEFGRTKESYKVPYGAVLAKGDGEQVAGGETVANWDPHTMPVITEVSGFVRFTDMIDGQTITRQTDELTGLSSLVVLDSAERTAGGKDLRPALKIVDAQGNDVLIPGTDMPAQYFLPGKAIVQLEDGVQISSGDTLARIPQESGGTKDITGGLPRVADLFEARRPKEPAILAEISGIVSFGKETKGKRRLVITPVDGSDPYEEMIPKWRQLNVFEGERVERGDVISDGPEAPHDILRLRGVHAVTRYIVNEVQDVYRLQGVKINDKHIEVIVRQMLRKATIVNAGSSDFLEGEQVEYSRVKIANRELEANGKVGATYSRDLLGITKASLATESFISAASFQETTRVLTEAAVAGKRDELRGLKENVIVGRLIPAGTGYAYHQDRMRRRAAGEAPAAPQVTAEDASASLAELLNAGLGGSDNE.

The Zn(2+) site is built by C70, C72, C85, and C88. Mg(2+) is bound by residues D460, D462, and D464. At K972 the chain carries N6-acetyllysine.

Belongs to the RNA polymerase beta' chain family. As to quaternary structure, the RNAP catalytic core consists of 2 alpha, 1 beta, 1 beta' and 1 omega subunit. When a sigma factor is associated with the core the holoenzyme is formed, which can initiate transcription. Mg(2+) serves as cofactor. Requires Zn(2+) as cofactor.

It carries out the reaction RNA(n) + a ribonucleoside 5'-triphosphate = RNA(n+1) + diphosphate. Functionally, DNA-dependent RNA polymerase catalyzes the transcription of DNA into RNA using the four ribonucleoside triphosphates as substrates. This chain is DNA-directed RNA polymerase subunit beta', found in Escherichia coli O6:K15:H31 (strain 536 / UPEC).